A 232-amino-acid chain; its full sequence is Chaperone protein CssC (232 aa).

Residues 1-20 (MKSKLIILLMLVPFSSFSTE) form the signal peptide.

Belongs to the periplasmic pilus chaperone family.

It localises to the periplasm. Involved in the biogenesis of the CS6 fimbria. This is Chaperone protein CssC (cssC) from Escherichia coli.